We begin with the raw amino-acid sequence, 395 residues long: Multidrug resistance protein MdtL (395 aa).

The next 12 helical transmembrane spans lie at 4-24 (FLLC…MYLV), 42-62 (IAFS…GKIA), 69-89 (PVAI…SRAS), 93-113 (LFLS…VVAF), 131-151 (LLNG…HLIM), 158-178 (SLFY…LFIL), 217-237 (VSVI…VMGF), 247-267 (ALTA…LGLF), 271-291 (TLML…SLAH), 295-315 (VTLF…GVAM), 328-350 (VASS…LAAI), and 355-377 (AMNM…IFSV).

It belongs to the major facilitator superfamily. DHA1 family. MdtL (TC 2.A.1.2.22) subfamily.

The protein resides in the cell inner membrane. The chain is Multidrug resistance protein MdtL from Salmonella newport (strain SL254).